Consider the following 284-residue polypeptide: Diaminopimelate epimerase (284 aa).

Substrate-binding residues include asparagine 21, glutamine 54, and asparagine 74. The Proton donor role is filled by cysteine 83. Substrate-binding positions include 84–85 (GN), asparagine 167, asparagine 200, and 218–219 (ER). The Proton acceptor role is filled by cysteine 227. 228–229 (GS) lines the substrate pocket.

The protein belongs to the diaminopimelate epimerase family. As to quaternary structure, homodimer.

It localises to the cytoplasm. The catalysed reaction is (2S,6S)-2,6-diaminopimelate = meso-2,6-diaminopimelate. Its pathway is amino-acid biosynthesis; L-lysine biosynthesis via DAP pathway; DL-2,6-diaminopimelate from LL-2,6-diaminopimelate: step 1/1. Functionally, catalyzes the stereoinversion of LL-2,6-diaminopimelate (L,L-DAP) to meso-diaminopimelate (meso-DAP), a precursor of L-lysine and an essential component of the bacterial peptidoglycan. In Buchnera aphidicola subsp. Acyrthosiphon pisum (strain APS) (Acyrthosiphon pisum symbiotic bacterium), this protein is Diaminopimelate epimerase.